Here is a 193-residue protein sequence, read N- to C-terminus: Putative histone H2B type 2-C (193 aa).

Positions 1-12 (MPEPAKFAPAPK) are enriched in low complexity. Positions 1 to 33 (MPEPAKFAPAPKKGSKKAVTKAQKKDGKKRKRS) are disordered. At P2 the chain carries N-acetylproline. K6 is modified (N6-(2-hydroxyisobutyryl)lysine; alternate). Residues K6 and K12 each carry the N6-(beta-hydroxybutyryl)lysine; alternate modification. Residues K6, K12, and K13 each carry the N6-acetyllysine; alternate modification. K6 bears the N6-butyryllysine; alternate mark. Residues K6, K12, and K13 each carry the N6-crotonyllysine; alternate modification. K6 and K12 each carry N6-lactoyllysine; alternate. K6 is covalently cross-linked (Glycyl lysine isopeptide (Lys-Gly) (interchain with G-Cter in SUMO2); alternate). N6-(2-hydroxyisobutyryl)lysine; alternate is present on K13. S15 is subject to Phosphoserine; by STK4/MST1. 4 positions are modified to N6-acetyllysine; alternate: K16, K17, K21, and K24. K16, K17, K21, and K24 each carry N6-crotonyllysine; alternate. N6-lactoyllysine; alternate occurs at positions 16, 17, 21, and 24. N6-(beta-hydroxybutyryl)lysine; alternate occurs at positions 17 and 21. An N6-glutaryllysine; alternate modification is found at K17. N6-(2-hydroxyisobutyryl)lysine; alternate is present on residues K21 and K24. N6-butyryllysine; alternate is present on K21. K21 is covalently cross-linked (Glycyl lysine isopeptide (Lys-Gly) (interchain with G-Cter in SUMO2); alternate). K25 carries the post-translational modification N6-(2-hydroxyisobutyryl)lysine. K35 carries the N6-(2-hydroxyisobutyryl)lysine; alternate modification. K35 carries the post-translational modification N6-(beta-hydroxybutyryl)lysine; alternate. K35 bears the N6-crotonyllysine; alternate mark. K35 bears the N6-glutaryllysine; alternate mark. Position 35 is an N6-succinyllysine; alternate (K35). K35 is covalently cross-linked (Glycyl lysine isopeptide (Lys-Gly) (interchain with G-Cter in ubiquitin); alternate). Position 37 is a phosphoserine; by AMPK (S37). Residues K44, K47, and K58 each carry the N6-(2-hydroxyisobutyryl)lysine; alternate modification. At K44 the chain carries N6-lactoyllysine; alternate. N6-glutaryllysine; alternate occurs at positions 44 and 47. K47 is subject to N6-methyllysine; alternate. K58 carries the post-translational modification N6,N6-dimethyllysine; alternate. R80 bears the Dimethylated arginine mark. K86 carries the post-translational modification N6-(2-hydroxyisobutyryl)lysine; alternate. Residue K86 is modified to N6-(beta-hydroxybutyryl)lysine; alternate. K86 is subject to N6-acetyllysine; alternate. K86 bears the N6-lactoyllysine; alternate mark. At K86 the chain carries N6,N6,N6-trimethyllysine; alternate. Omega-N-methylarginine is present on residues R87 and R93. The interval 111-136 (PCPRAPRRSPSTPAPSESLPGPGARS) is disordered.

Belongs to the histone H2B family. As to quaternary structure, the nucleosome is a histone octamer containing two molecules each of H2A, H2B, H3 and H4 assembled in one H3-H4 heterotetramer and two H2A-H2B heterodimers. The octamer wraps approximately 147 bp of DNA. In terms of processing, phosphorylation at Ser-37 (H2BS36ph) by AMPK in response to stress promotes transcription. Phosphorylated on Ser-15 (H2BS14ph) by STK4/MST1 during apoptosis; which facilitates apoptotic chromatin condensation. Also phosphorylated on Ser-15 in response to DNA double strand breaks (DSBs), and in correlation with somatic hypermutation and immunoglobulin class-switch recombination. Post-translationally, crotonylation (Kcr) is specifically present in male germ cells and marks testis-specific genes in post-meiotic cells, including X-linked genes that escape sex chromosome inactivation in haploid cells. Crotonylation marks active promoters and enhancers and confers resistance to transcriptional repressors. It is also associated with post-meiotically activated genes on autosomes. Lactylated in macrophages by EP300/P300 by using lactoyl-CoA directly derived from endogenous or exogenous lactate, leading to stimulates gene transcription.

It localises to the nucleus. The protein resides in the chromosome. Functionally, core component of nucleosome. Nucleosomes wrap and compact DNA into chromatin, limiting DNA accessibility to the cellular machineries which require DNA as a template. Histones thereby play a central role in transcription regulation, DNA repair, DNA replication and chromosomal stability. DNA accessibility is regulated via a complex set of post-translational modifications of histones, also called histone code, and nucleosome remodeling. The polypeptide is Putative histone H2B type 2-C (Homo sapiens (Human)).